Reading from the N-terminus, the 159-residue chain is Phosphopantetheine adenylyltransferase (159 aa).

Substrate is bound at residue Thr9. ATP-binding positions include 9 to 10 (TF) and His17. The substrate site is built by Lys41, Leu73, and Arg87. Residues 88–90 (GLR), Glu98, and 123–129 (YSFISST) each bind ATP.

It belongs to the bacterial CoaD family. Homohexamer. It depends on Mg(2+) as a cofactor.

It localises to the cytoplasm. The catalysed reaction is (R)-4'-phosphopantetheine + ATP + H(+) = 3'-dephospho-CoA + diphosphate. It participates in cofactor biosynthesis; coenzyme A biosynthesis; CoA from (R)-pantothenate: step 4/5. Reversibly transfers an adenylyl group from ATP to 4'-phosphopantetheine, yielding dephospho-CoA (dPCoA) and pyrophosphate. This Pseudomonas putida (strain GB-1) protein is Phosphopantetheine adenylyltransferase.